We begin with the raw amino-acid sequence, 408 residues long: LysM domain-containing protein ARB_01488 (408 aa).

The N-terminal stretch at 1 to 17 (MVKYALLPLVAVSLVQA) is a signal peptide. The region spanning 42–91 (SWINVVDASGKLTCDAFLDTINVAKRQFIFWNPQLNSDCSNIQSKASYCA) is the LysM 1 domain. A disordered region spans residues 98–178 (SKQTRGQMDP…HGPKEAPPPD (81 aa)). Positions 106–116 (DPPPKTKPLPP) are enriched in pro residues. LysM domains are found at residues 270–320 (QYHT…RVCV) and 360–406 (SFEL…YACV).

It is found in the secreted. Might have a role in sequestration of chitin oligosaccharides (breakdown products of fungal cell walls that are released during invasion and act as triggers of host immunity) to dampen host defense. In Arthroderma benhamiae (strain ATCC MYA-4681 / CBS 112371) (Trichophyton mentagrophytes), this protein is LysM domain-containing protein ARB_01488.